The sequence spans 193 residues: Thymidine kinase (193 aa).

Residues 15–22 (GCMYSGKT) and 87–90 (DELH) each bind ATP. E88 (proton acceptor) is an active-site residue. Zn(2+)-binding residues include C147, C150, C185, and C188.

Belongs to the thymidine kinase family. In terms of assembly, homotetramer.

The protein localises to the cytoplasm. It catalyses the reaction thymidine + ATP = dTMP + ADP + H(+). This chain is Thymidine kinase, found in Chloroflexus aurantiacus (strain ATCC 29366 / DSM 635 / J-10-fl).